The primary structure comprises 93 residues: Cytochrome c (93 aa).

Residues 1-13 (AALPPGDAAAAQG) are compositionally biased toward low complexity. The disordered stretch occupies residues 1 to 21 (AALPPGDAAAAQGGSNGVGPN). A heme c-binding site is contributed by M70.

It belongs to the cytochrome c family. Binds 1 heme c group covalently per subunit.

It localises to the mitochondrion intermembrane space. Electron carrier protein. The oxidized form of the cytochrome c heme group can accept an electron from the heme group of the cytochrome c1 subunit of cytochrome reductase. Cytochrome c then transfers this electron to the cytochrome oxidase complex, the final protein carrier in the mitochondrial electron-transport chain. This chain is Cytochrome c, found in Trypanosoma brucei brucei.